A 426-amino-acid polypeptide reads, in one-letter code: Serine hydroxymethyltransferase (426 aa).

(6S)-5,6,7,8-tetrahydrofolate contacts are provided by residues Leu122 and 126 to 128 (GHL). N6-(pyridoxal phosphate)lysine is present on Lys231. (6S)-5,6,7,8-tetrahydrofolate contacts are provided by residues Glu247 and 355–357 (SPF).

This sequence belongs to the SHMT family. Homodimer. Requires pyridoxal 5'-phosphate as cofactor.

It localises to the cytoplasm. The catalysed reaction is (6R)-5,10-methylene-5,6,7,8-tetrahydrofolate + glycine + H2O = (6S)-5,6,7,8-tetrahydrofolate + L-serine. The protein operates within one-carbon metabolism; tetrahydrofolate interconversion. It participates in amino-acid biosynthesis; glycine biosynthesis; glycine from L-serine: step 1/1. In terms of biological role, catalyzes the reversible interconversion of serine and glycine with tetrahydrofolate (THF) serving as the one-carbon carrier. This reaction serves as the major source of one-carbon groups required for the biosynthesis of purines, thymidylate, methionine, and other important biomolecules. Also exhibits THF-independent aldolase activity toward beta-hydroxyamino acids, producing glycine and aldehydes, via a retro-aldol mechanism. The protein is Serine hydroxymethyltransferase of Cyanothece sp. (strain PCC 7425 / ATCC 29141).